The following is a 780-amino-acid chain: ATP-dependent 6-phosphofructokinase, liver type (780 aa).

A2 carries the post-translational modification N-acetylalanine. Residues 2 to 390 are N-terminal catalytic PFK domain 1; the sequence is ATVDLEKLRM…NWKIYKLLAH (389 aa). ATP is bound by residues G25, 88-89, and 118-121; these read RC and GDGS. Mg(2+) is bound at residue D119. Residues 164 to 166, R201, 208 to 210, E264, R292, and 298 to 301 each bind substrate; these read SID, MGR, and HVQR. Residue D166 is the Proton acceptor of the active site. S377 is subject to Phosphoserine. Residues 391 to 400 are interdomain linker; it reads QKVSKEKSNF. Positions 401-780 are C-terminal regulatory PFK domain 2; it reads SLAILNVGAP…RRTLSIDKGF (380 aa). Beta-D-fructose 2,6-bisphosphate-binding positions include R470, 527-531, R565, 572-574, and E628; these read TISNN and MGG. S529 is a glycosylation site (O-linked (GlcNAc) serine). Y640 is subject to Phosphotyrosine. Beta-D-fructose 2,6-bisphosphate is bound by residues R654, 660–663, and R734; that span reads HLQQ. At S775 the chain carries Phosphoserine.

The protein belongs to the phosphofructokinase type A (PFKA) family. ATP-dependent PFK group I subfamily. Eukaryotic two domain clade 'E' sub-subfamily. In terms of assembly, homo- and heterotetramers. Phosphofructokinase (PFK) enzyme functions as a tetramer composed of different combinations of 3 types of subunits, called PFKM (M), PFKL (L) and PFKP (P). The composition of the PFK tetramer differs according to the tissue type it is present in. The kinetic and regulatory properties of the tetrameric enzyme are dependent on the subunit composition, hence can vary across tissues. Mg(2+) serves as cofactor. In terms of processing, glcNAcylation at Ser-529 by OGT decreases enzyme activity, leading to redirect glucose flux through the oxidative pentose phosphate pathway. Glycosylation is stimulated by both hypoxia and glucose deprivation.

The protein resides in the cytoplasm. It catalyses the reaction beta-D-fructose 6-phosphate + ATP = beta-D-fructose 1,6-bisphosphate + ADP + H(+). Its pathway is carbohydrate degradation; glycolysis; D-glyceraldehyde 3-phosphate and glycerone phosphate from D-glucose: step 3/4. Its activity is regulated as follows. Allosterically activated by ADP, AMP, or fructose 2,6-bisphosphate, and allosterically inhibited by ATP or citrate. GlcNAcylation by OGT overcomes allosteric regulation. Functionally, catalyzes the phosphorylation of D-fructose 6-phosphate to fructose 1,6-bisphosphate by ATP, the first committing step of glycolysis. Negatively regulates the phagocyte oxidative burst in response to bacterial infection by controlling cellular NADPH biosynthesis and NADPH oxidase-derived reactive oxygen species. Upon macrophage activation, drives the metabolic switch toward glycolysis, thus preventing glucose turnover that produces NADPH via pentose phosphate pathway. In Mus musculus (Mouse), this protein is ATP-dependent 6-phosphofructokinase, liver type.